The following is a 158-amino-acid chain: Endoribonuclease YbeY (158 aa).

Zn(2+) is bound by residues H119, H123, and H129.

The protein belongs to the endoribonuclease YbeY family. Zn(2+) is required as a cofactor.

It is found in the cytoplasm. Its function is as follows. Single strand-specific metallo-endoribonuclease involved in late-stage 70S ribosome quality control and in maturation of the 3' terminus of the 16S rRNA. This is Endoribonuclease YbeY from Acinetobacter baumannii (strain AB307-0294).